The following is a 194-amino-acid chain: Probable thymidylate kinase (194 aa).

Residue 7–14 participates in ATP binding; sequence GIDGSGKT.

Belongs to the thymidylate kinase family.

The catalysed reaction is dTMP + ATP = dTDP + ADP. The polypeptide is Probable thymidylate kinase (tmk) (Methanothermobacter thermautotrophicus (strain ATCC 29096 / DSM 1053 / JCM 10044 / NBRC 100330 / Delta H) (Methanobacterium thermoautotrophicum)).